The sequence spans 905 residues: Translation initiation factor IF-2 (905 aa).

Positions 50 to 62 (HYEAKGGEDKAAE) are enriched in basic and acidic residues. The interval 50 to 306 (HYEAKGGEDK…QKHEVGGVRL (257 aa)) is disordered. Residues 63–75 (KNAPAATPASASK) show a composition bias toward low complexity. The segment covering 89–125 (GPKPSAAPKPGAAPKPGGAPKPGGAPKPGATPKPGGA) has biased composition (pro residues). Over residues 161-171 (PFSTGSSSDRP) the composition is skewed to low complexity. Residues 233 to 276 (GSGGGGRGRGGRGGGPGHGGPGHGGFRGRGGRRGGTAGAFGRPG) show a composition bias toward gly residues. The span at 280–290 (RRGKKSKRQKR) shows a compositional bias: basic residues. Over residues 291-302 (HEFEEQQKHEVG) the composition is skewed to basic and acidic residues. The region spanning 401–575 (KRPPVVTVMG…LTADAALELT (175 aa)) is the tr-type G domain. A G1 region spans residues 410–417 (GHVDHGKT). 410 to 417 (GHVDHGKT) is a binding site for GTP. The G2 stretch occupies residues 435-439 (GITQG). Positions 460-463 (DTPG) are G3. GTP contacts are provided by residues 460 to 464 (DTPGH) and 514 to 517 (NKID). The tract at residues 514 to 517 (NKID) is G4. The segment at 550–552 (SAK) is G5.

It belongs to the TRAFAC class translation factor GTPase superfamily. Classic translation factor GTPase family. IF-2 subfamily.

It localises to the cytoplasm. Functionally, one of the essential components for the initiation of protein synthesis. Protects formylmethionyl-tRNA from spontaneous hydrolysis and promotes its binding to the 30S ribosomal subunits. Also involved in the hydrolysis of GTP during the formation of the 70S ribosomal complex. The protein is Translation initiation factor IF-2 of Corynebacterium aurimucosum (strain ATCC 700975 / DSM 44827 / CIP 107346 / CN-1) (Corynebacterium nigricans).